The chain runs to 914 residues: Probable UDP-N-acetylglucosamine--peptide N-acetylglucosaminyltransferase SPINDLY (914 aa).

The disordered stretch occupies residues 1-39 (MVGLEDDTERERSPVVENGFSNGSRSSSSSAGVLSPSRK). A compositionally biased stretch (low complexity) spans 19 to 37 (GFSNGSRSSSSSAGVLSPS). Phosphoserine is present on serine 35. 11 TPR repeats span residues 43–76 (GNDT…DSKN), 77–110 (VEAH…DPHN), 112–144 (CALT…DASY), 152–185 (AIVL…DPHY), 186–219 (APAY…RPMY), 220–253 (AEAY…SPNF), 261–294 (AIAL…NWHY), 295–328 (ADAM…NPHC), 329–362 (AEAC…KPNF), 364–396 (QSLN…NPTY), and 397–430 (AEAF…DPDS). Residues 431-914 (RNAGQNRLLA…QLSKRMDSTS (484 aa)) form a catalytic region region. The tract at residues 866–914 (PLISKDLGPSRVSVTGEATPSLKANGSAPVPSSLPTQSPQLSKRMDSTS) is disordered. Residues 877–889 (VSVTGEATPSLKA) are compositionally biased toward polar residues. The segment covering 894 to 907 (PVPSSLPTQSPQLS) has biased composition (low complexity).

It belongs to the glycosyltransferase 41 family. O-GlcNAc transferase subfamily. Homomultimer; via its TPR repeats. Interacts with GI. Interacts with TCP14 and TCP15. Interacts (via N-terminus) with APRR5. Interacts with CPN20. Widely expressed. Present throughout the plant (at protein level).

The protein localises to the cytoplasm. The protein resides in the nucleus. It carries out the reaction L-seryl-[protein] + UDP-N-acetyl-alpha-D-glucosamine = 3-O-(N-acetyl-beta-D-glucosaminyl)-L-seryl-[protein] + UDP + H(+). It catalyses the reaction L-threonyl-[protein] + UDP-N-acetyl-alpha-D-glucosamine = 3-O-(N-acetyl-beta-D-glucosaminyl)-L-threonyl-[protein] + UDP + H(+). The catalysed reaction is L-seryl-[protein] + GDP-beta-L-fucose = 3-O-(alpha-L-fucosyl)-L-seryl-[protein] + GDP + H(+). The enzyme catalyses L-threonyl-[protein] + GDP-beta-L-fucose = 3-O-(alpha-L-fucosyl)-L-threonyl-[protein] + GDP + H(+). It functions in the pathway protein modification; protein glycosylation. Its function is as follows. Probable O-linked N-acetylglucosamine transferase (OGT) involved in various processes such as gibberellin (GA) signaling pathway and circadian clock. OGTs catalyze the addition of nucleotide-activated sugars directly onto the polypeptide through O-glycosidic linkage with the hydroxyl of serine or threonine. Probably acts by adding O-linked sugars to yet unknown proteins. Acts as a repressor of GA signaling pathway to inhibit hypocotyl elongation. Functions with GIGANTEA (GI) in pathways controlling flowering, circadian cotyledon movements and hypocotyl elongation. Acts as a light-regulated promoter of elongation via its interaction with GI. Acts as an activator of cytokinin signaling. Required with SEC for gamete and seed development. Its OGT activity has been proved in vitro but not in vivo. Possesses O-fucosyltransferase activity on specific serine and threonine residues. Mediates O-fucosylation of the DELLA protein RGA, a repressor of the GA signaling pathway. O-fucosylation enhances RGA activity by promoting RGA binding to key transcription factors in brassinosteroid and light-signaling pathways. Regulates root hair patterning upstream of the transcription factor WER, independently of DELLA proteins and GA signaling. Involved in abscisic acid (ABA) signaling partly through functional ABAR. Mediates O-fucosylation of CPN20 that may depress ABA responses during seed germination and seedling development. Involved in the modulation of the pace of the circadian clock by mediating O-fucosylation of APRR5, one of the core circadian clock components. O-fucosylation promotes APRR5 proteolysis. This is Probable UDP-N-acetylglucosamine--peptide N-acetylglucosaminyltransferase SPINDLY from Arabidopsis thaliana (Mouse-ear cress).